A 167-amino-acid polypeptide reads, in one-letter code: Large ribosomal subunit protein bL9 (167 aa).

Belongs to the bacterial ribosomal protein bL9 family.

Its function is as follows. Binds to the 23S rRNA. This chain is Large ribosomal subunit protein bL9, found in Chlamydia trachomatis serovar L2 (strain ATCC VR-902B / DSM 19102 / 434/Bu).